Reading from the N-terminus, the 702-residue chain is Flagellar operon control protein UmoB (702 aa).

A run of 5 helical transmembrane segments spans residues 4 to 24, 204 to 224, 227 to 247, 343 to 363, and 656 to 676; these read SVII…FLFF, GFWN…ALMM, VFLP…LFLI, IIFV…QPLS, and GNTL…FFII.

It belongs to the IgaA family.

It is found in the cell inner membrane. Functionally, up-regulator of flagellar flhDC master operon. This chain is Flagellar operon control protein UmoB (umoB), found in Proteus mirabilis.